Here is a 202-residue protein sequence, read N- to C-terminus: MELLKEQIREVARVEKGNVLKVDSFLNHQLDIPLLNEIGKELKKRFQGEKVDKILTAEVSGIAIAAIAAQYFNVPVVFAKKTQSKNLDQDTYEGEVYSYTKGQAYKIRVSKRYLHEKENILIIDDFLANGEALQGLREIVVQANANLVGAGIVIEKGFQGGGKRLRAENMRIESLAIIDEMNESTLVFRDDKADLKADPKAS.

The xanthine site is built by Leu20 and Asn27. Residue Ala128–Ala132 participates in 5-phospho-alpha-D-ribose 1-diphosphate binding. Lys156 lines the xanthine pocket.

It belongs to the purine/pyrimidine phosphoribosyltransferase family. Xpt subfamily. In terms of assembly, homodimer.

The protein resides in the cytoplasm. It carries out the reaction XMP + diphosphate = xanthine + 5-phospho-alpha-D-ribose 1-diphosphate. It functions in the pathway purine metabolism; XMP biosynthesis via salvage pathway; XMP from xanthine: step 1/1. Converts the preformed base xanthine, a product of nucleic acid breakdown, to xanthosine 5'-monophosphate (XMP), so it can be reused for RNA or DNA synthesis. The chain is Xanthine phosphoribosyltransferase from Alkaliphilus metalliredigens (strain QYMF).